A 465-amino-acid chain; its full sequence is ATP-dependent protease ATPase subunit HslU (465 aa).

ATP-binding positions include Val-20, 62–67 (GVGKTE), Asp-277, Glu-343, and Arg-415.

It belongs to the ClpX chaperone family. HslU subfamily. A double ring-shaped homohexamer of HslV is capped on each side by a ring-shaped HslU homohexamer. The assembly of the HslU/HslV complex is dependent on binding of ATP.

Its subcellular location is the cytoplasm. In terms of biological role, ATPase subunit of a proteasome-like degradation complex; this subunit has chaperone activity. The binding of ATP and its subsequent hydrolysis by HslU are essential for unfolding of protein substrates subsequently hydrolyzed by HslV. HslU recognizes the N-terminal part of its protein substrates and unfolds these before they are guided to HslV for hydrolysis. This is ATP-dependent protease ATPase subunit HslU from Geobacillus kaustophilus (strain HTA426).